The chain runs to 139 residues: Galactoside-binding soluble lectin 13 (139 aa).

Residues 6–138 enclose the Galectin domain; it reads VPYKLPVSLS…DISLTSVCVC (133 aa).

As to quaternary structure, homodimer; disulfide-linked. In terms of tissue distribution, detected in adult and fetal spleen, fetal kidney, adult urinary bladder and placenta. Placental expression originates predominantly from the syncytiotrophoblast.

It is found in the cytoplasm. Its subcellular location is the nucleus matrix. Functionally, binds beta-galactoside and lactose. Strong inducer of T-cell apoptosis. Has hemagglutinating activity towards chicken erythrocytes. The polypeptide is Galactoside-binding soluble lectin 13 (LGALS13) (Homo sapiens (Human)).